A 76-amino-acid chain; its full sequence is Large ribosomal subunit protein uL29 (76 aa).

This sequence belongs to the universal ribosomal protein uL29 family.

This Gloeothece citriformis (strain PCC 7424) (Cyanothece sp. (strain PCC 7424)) protein is Large ribosomal subunit protein uL29.